The chain runs to 327 residues: MDAAWRGGVGCSPVCLDLCVGLSPVREPSAARHELLDRPAGCRGGGDSKSMTNDEAKIVEAKVTQMSEENRRLTEVIARLYGGQIPRLGLDGSASPPRPVSPLSGKKRSRESMETANSCDANSNRHQGGDADHAESFAADDGTCRRIKVSRVCRRIDPSDTSLVVKDGYQWRKYGQKVTRDNPSPRAYFRCAFAPSCPVKKKVQRSAEDSSLLVATYEGEHNHPHPSPRAGELPAAAGGAGGSLPCSISINSSGPTITLDLTKNGGAVQVVEAAHPPPPPDLKEVCREVASPEFRTALVEQMASALTSDPKFTGALAAAILQKLPEF.

Residues 56 to 76 (AKIVEAKVTQMSEENRRLTEV) adopt a coiled-coil conformation. The tract at residues 87 to 135 (RLGLDGSASPPRPVSPLSGKKRSRESMETANSCDANSNRHQGGDADHAE) is disordered. The short motif at 106-112 (KKRSRES) is the Nuclear localization signal element. Over residues 114–126 (ETANSCDANSNRH) the composition is skewed to polar residues. Positions 160–226 (DTSLVVKDGY…YEGEHNHPHP (67 aa)) form a DNA-binding region, WRKY.

Belongs to the WRKY group II-a family.

Its subcellular location is the nucleus. In terms of biological role, transcription repressor. Interacts specifically with the W box (5'-(T)TGAC[CT]-3'), a frequently occurring elicitor-responsive cis-acting element. Regulates, probably indirectly, the activation of defense-related genes during defense response. Modulates plant innate immunity against X.oryzae pv. oryzae (Xoo). This is WRKY transcription factor WRKY76 from Oryza sativa subsp. japonica (Rice).